Reading from the N-terminus, the 365-residue chain is Chorismate synthase (365 aa).

R48 is a binding site for NADP(+). Residues 125-127, G286, 301-305, and R328 contribute to the FMN site; these read RGS and KPTPS.

Belongs to the chorismate synthase family. FMNH2 serves as cofactor.

The enzyme catalyses 5-O-(1-carboxyvinyl)-3-phosphoshikimate = chorismate + phosphate. It participates in metabolic intermediate biosynthesis; chorismate biosynthesis; chorismate from D-erythrose 4-phosphate and phosphoenolpyruvate: step 7/7. In terms of biological role, catalyzes the anti-1,4-elimination of the C-3 phosphate and the C-6 proR hydrogen from 5-enolpyruvylshikimate-3-phosphate (EPSP) to yield chorismate, which is the branch point compound that serves as the starting substrate for the three terminal pathways of aromatic amino acid biosynthesis. This reaction introduces a second double bond into the aromatic ring system. In Methanosphaera stadtmanae (strain ATCC 43021 / DSM 3091 / JCM 11832 / MCB-3), this protein is Chorismate synthase.